The following is a 1146-amino-acid chain: Pol polyprotein (1146 aa).

The interval 13-77 is disordered; that stretch reads SKKREARGSR…GSSRGSQPGQ (65 aa). A compositionally biased stretch (polar residues) spans 29–41; sequence FPDTTEESAQQIC. Residues 45–59 show a composition bias toward basic and acidic residues; the sequence is DSSDSKSVPRSERNK. The segment covering 66-76 has biased composition (polar residues); the sequence is GEGSSRGSQPG. The Peptidase A2 domain occupies 100–174; the sequence is LNVLLDTGAD…IPVTILGRDI (75 aa). Asp-105 is a catalytic residue. The region spanning 230-419 is the Reverse transcriptase domain; the sequence is EGKISEASDN…PPYSWLGYQL (190 aa). An RNase H type-1 domain is found at 617–740; it reads PTSGITIYTD…ADEAAKIKEE (124 aa). The Integrase-type zinc-finger motif lies at 878–919; it reads ENIQEAQDEHENWHTSPKILARNYKIPLTVAKQITQECPHCT. The Zn(2+) site is built by His-887, His-891, Cys-915, and Cys-918. In terms of domain architecture, Integrase catalytic spans 921-1078; that stretch reads QGSGPAGCVM…TPWEVFITNQ (158 aa). The integrase-type DNA-binding region spans 1096–1144; that stretch reads KFCFYKIPGEHDWKGPTRVLWKGDGAVVVNDEGKGIIAVPLTRTKLLIK.

It belongs to the retroviral Pol polyprotein family. In terms of processing, specific enzymatic cleavages in vivo yield mature proteins.

The catalysed reaction is Endohydrolysis of RNA in RNA/DNA hybrids. Three different cleavage modes: 1. sequence-specific internal cleavage of RNA. Human immunodeficiency virus type 1 and Moloney murine leukemia virus enzymes prefer to cleave the RNA strand one nucleotide away from the RNA-DNA junction. 2. RNA 5'-end directed cleavage 13-19 nucleotides from the RNA end. 3. DNA 3'-end directed cleavage 15-20 nucleotides away from the primer terminus.. The enzyme catalyses 3'-end directed exonucleolytic cleavage of viral RNA-DNA hybrid.. It catalyses the reaction DNA(n) + a 2'-deoxyribonucleoside 5'-triphosphate = DNA(n+1) + diphosphate. Functionally, during replicative cycle of retroviruses, the reverse-transcribed viral DNA is integrated into the host chromosome by the viral integrase enzyme. RNase H activity is associated with the reverse transcriptase. This is Pol polyprotein (pol) from Equus asinus (Donkey).